The sequence spans 350 residues: Variable large protein 4 (350 aa).

A signal peptide spans 1-18 (MRRRISAIIMTLFMVLVS). Residue cysteine 19 is the site of N-palmitoyl cysteine attachment. Residue cysteine 19 is the site of S-diacylglycerol cysteine attachment.

Belongs to the variable large protein (Vlp) family. Delta subfamily.

It is found in the cell outer membrane. In terms of biological role, the Vlp and Vsp proteins are antigenically distinct proteins, only one vlp or vsp gene is transcriptionally active at any one time. Switching between these genes is a mechanism of host immune response evasion. The chain is Variable large protein 4 from Borrelia hermsii.